Consider the following 211-residue polypeptide: N,O-diacetylmuramidase (211 aa).

Residues Asp6 and Glu100 contribute to the active site. Cys108 and Cys147 are joined by a disulfide.

This sequence belongs to the glycosyl hydrolase 25 family.

It localises to the secreted. The protein resides in the extracellular space. The catalysed reaction is Hydrolysis of (1-&gt;4)-beta-linkages between N-acetylmuramic acid and N-acetyl-D-glucosamine residues in a peptidoglycan and between N-acetyl-D-glucosamine residues in chitodextrins.. In terms of biological role, this enzyme has both lysozyme (acetylmuramidase) and diacetylmuramidase activities. This Chalaropsis sp protein is N,O-diacetylmuramidase.